Here is a 181-residue protein sequence, read N- to C-terminus: Secreted chorismate mutase (181 aa).

The N-terminal stretch at 1-20 (MLASVALAALAGVGTPHATA) is a signal peptide. Residues 21 to 100 (DDASPLVPLV…ATSSVEHTRF (80 aa)) form the Chorismate mutase domain. Substrate-binding positions include R36, K47, D56, 59 to 63 (REQQV), 92 to 96 (TSSVE), and R121. A disulfide bridge connects residues C147 and C180.

In terms of assembly, homodimer.

The protein resides in the secreted. It carries out the reaction chorismate = prephenate. It participates in metabolic intermediate biosynthesis; prephenate biosynthesis; prephenate from chorismate: step 1/1. In terms of biological role, catalyzes the Claisen rearrangement of chorismate to prephenate. May play some role in the pathogenicity. The polypeptide is Secreted chorismate mutase (Mycolicibacterium smegmatis (strain ATCC 700084 / mc(2)155) (Mycobacterium smegmatis)).